We begin with the raw amino-acid sequence, 267 residues long: MKIALKIAYLGDRYYGFQRQPGLRTVESVMRDALLRIGVANGDFCYAGRTDRGVSALGQVIDFWIEEDRAYLAFPRVINSLLPSDVWAWARAVAPVGFSARWSALWREYRYFLFSPDIDLSAVREAAGHLVGTHDFRNFSMSKVDTVRRIISIDVNAHCGIVVFDVRAEGFIWNMVRRIVGALELIGIGEKPVDWILELLDPSTPHGAPTAPPEGLMLMDVGYSDLEWEEDRYTKQRVSRMLISEARRRAAMSGVIQEMLRRMRDTF.

D51 acts as the Nucleophile in catalysis. Y109 lines the substrate pocket.

The protein belongs to the tRNA pseudouridine synthase TruA family.

It carries out the reaction uridine(38/39/40) in tRNA = pseudouridine(38/39/40) in tRNA. In terms of biological role, formation of pseudouridine at positions 38, 39 and 40 in the anticodon stem and loop of transfer RNAs. The chain is tRNA pseudouridine synthase A from Methanothrix thermoacetophila (strain DSM 6194 / JCM 14653 / NBRC 101360 / PT) (Methanosaeta thermophila).